The sequence spans 111 residues: uncharacterized protein (111 aa).

2 helical membrane-spanning segments follow: residues 45–65 (AFLIPVKYTAATVLLALLLVI) and 91–111 (LPAGIGLAVLTKVLKHLILHI).

Its subcellular location is the cell membrane. This is an uncharacterized protein from Methanothermobacter thermautotrophicus (strain ATCC 29096 / DSM 1053 / JCM 10044 / NBRC 100330 / Delta H) (Methanobacterium thermoautotrophicum).